Consider the following 161-residue polypeptide: METSQKYHTCGSTLVQTIDAPLSLVWSILRRFDNPQAYKQFVKTCNLSSGDGGEGSVREVTVVSGLPAEFSRERLDELDDESHVMMISIIGGDHRLVNYRSKTMAFVAADTEEKTVVVESYVVDVPEGNSEEETTSFADTIVGFNLKSLAKLSERVAHLKL.

An START-like region spans residues 3 to 154 (TSQKYHTCGS…NLKSLAKLSE (152 aa)). Abscisate-binding positions include Lys-39, 68-73 (AEFSRE), 95-101 (RLVNYRS), and Glu-119. Residues 64–68 (SGLPA) carry the Gate loop motif. The Latch loop motif lies at 94–96 (HRL).

Belongs to the PYR/PYL/RCAR abscisic acid intracellular receptor family. Homodimer. Binds ABA on one subunit only. Interacts with PP2Cs. Binds to CARs protein in an ABA-independent manner, both at the plasma membrane and in the nucleus. Interacts with I-2 and TOPP1.

Its subcellular location is the cytoplasm. It localises to the nucleus. The protein resides in the cell membrane. In terms of biological role, receptor for abscisic acid (ABA) required for ABA-mediated responses such as stomatal closure and germination inhibition. Inhibits the activity of group-A protein phosphatases type 2C (PP2Cs) when activated by ABA. Suppresses the phosphatase activity of TOPP1 in a dose-dependent manner in vitro. The chain is Abscisic acid receptor PYL11 (PYL11) from Arabidopsis thaliana (Mouse-ear cress).